The primary structure comprises 261 residues: MTDPAHHDDRPTLVIKVGGNDLDDATFVAELARVVAAIRPLPVLVHGGGKEIGILQETLGSTPRFVGGLRYTDATALTAAEMVLCGSVSTRLVAALIAAGADALGISGVDRGLIRVVKQEHPAGDLGRVGRPTAVRGEVLRDLLDHGVIPVIAPIALGPDGPYNVNADEAAGAVAAALGVSEAVFVTNVPGVLVKGDVMRYLTRSEIERLIADGTISGGMIPKVRAALTALDAGVHAARITNLEGLLNQGTTIITEREPHE.

Substrate-binding positions include 48–49 (GG), Arg-70, and Asn-164.

It belongs to the acetylglutamate kinase family. ArgB subfamily.

The protein resides in the cytoplasm. The enzyme catalyses N-acetyl-L-glutamate + ATP = N-acetyl-L-glutamyl 5-phosphate + ADP. Its pathway is amino-acid biosynthesis; L-arginine biosynthesis; N(2)-acetyl-L-ornithine from L-glutamate: step 2/4. Functionally, catalyzes the ATP-dependent phosphorylation of N-acetyl-L-glutamate. The sequence is that of Acetylglutamate kinase from Roseiflexus sp. (strain RS-1).